The sequence spans 280 residues: Probable endonuclease 4 (280 aa).

The Zn(2+) site is built by histidine 77, histidine 117, glutamate 148, aspartate 180, histidine 183, histidine 215, aspartate 228, histidine 230, and glutamate 259.

This sequence belongs to the AP endonuclease 2 family. Zn(2+) serves as cofactor.

The enzyme catalyses Endonucleolytic cleavage to 5'-phosphooligonucleotide end-products.. Endonuclease IV plays a role in DNA repair. It cleaves phosphodiester bonds at apurinic or apyrimidinic (AP) sites, generating a 3'-hydroxyl group and a 5'-terminal sugar phosphate. This Thermoplasma volcanium (strain ATCC 51530 / DSM 4299 / JCM 9571 / NBRC 15438 / GSS1) protein is Probable endonuclease 4.